Reading from the N-terminus, the 249-residue chain is Orotidine 5'-phosphate decarboxylase (249 aa).

Residues Asp21, Lys43, 72–81 (DLKLYDIPET), Thr128, Arg193, Gln204, Gly224, and Arg225 each bind substrate. Lys74 serves as the catalytic Proton donor.

The protein belongs to the OMP decarboxylase family. Type 1 subfamily. In terms of assembly, homodimer.

It catalyses the reaction orotidine 5'-phosphate + H(+) = UMP + CO2. It functions in the pathway pyrimidine metabolism; UMP biosynthesis via de novo pathway; UMP from orotate: step 2/2. Catalyzes the decarboxylation of orotidine 5'-monophosphate (OMP) to uridine 5'-monophosphate (UMP). This chain is Orotidine 5'-phosphate decarboxylase, found in Desulfosudis oleivorans (strain DSM 6200 / JCM 39069 / Hxd3) (Desulfococcus oleovorans).